The chain runs to 484 residues: ATP synthase subunit beta (484 aa).

162-169 (GGAGVGKT) contributes to the ATP binding site.

It belongs to the ATPase alpha/beta chains family. In terms of assembly, F-type ATPases have 2 components, CF(1) - the catalytic core - and CF(0) - the membrane proton channel. CF(1) has five subunits: alpha(3), beta(3), gamma(1), delta(1), epsilon(1). CF(0) has three main subunits: a(1), b(2) and c(9-12). The alpha and beta chains form an alternating ring which encloses part of the gamma chain. CF(1) is attached to CF(0) by a central stalk formed by the gamma and epsilon chains, while a peripheral stalk is formed by the delta and b chains.

The protein localises to the cell inner membrane. The enzyme catalyses ATP + H2O + 4 H(+)(in) = ADP + phosphate + 5 H(+)(out). In terms of biological role, produces ATP from ADP in the presence of a proton gradient across the membrane. The catalytic sites are hosted primarily by the beta subunits. This chain is ATP synthase subunit beta, found in Agrobacterium fabrum (strain C58 / ATCC 33970) (Agrobacterium tumefaciens (strain C58)).